A 374-amino-acid chain; its full sequence is Histidinol-phosphate aminotransferase 1 (374 aa).

Lysine 232 carries the post-translational modification N6-(pyridoxal phosphate)lysine.

The protein belongs to the class-II pyridoxal-phosphate-dependent aminotransferase family. Histidinol-phosphate aminotransferase subfamily. Homodimer. The cofactor is pyridoxal 5'-phosphate.

It carries out the reaction L-histidinol phosphate + 2-oxoglutarate = 3-(imidazol-4-yl)-2-oxopropyl phosphate + L-glutamate. It functions in the pathway amino-acid biosynthesis; L-histidine biosynthesis; L-histidine from 5-phospho-alpha-D-ribose 1-diphosphate: step 7/9. In Ralstonia nicotianae (strain ATCC BAA-1114 / GMI1000) (Ralstonia solanacearum), this protein is Histidinol-phosphate aminotransferase 1 (hisC1).